The following is a 355-amino-acid chain: Putative [LysW]-L-2-aminoadipate/[LysW]-L-glutamate phosphate reductase (355 aa).

13–16 contributes to the NADP(+) binding site; that stretch reads SGMT. Cys153 is an active-site residue. Asn323 is an NADP(+) binding site.

Belongs to the NAGSA dehydrogenase family. Type 1 subfamily. LysY sub-subfamily.

It is found in the cytoplasm. The catalysed reaction is [amino-group carrier protein]-C-terminal-N-(1-carboxy-5-oxopentan-1-yl)-L-glutamine + phosphate + NADP(+) = [amino-group carrier protein]-C-terminal-N-(1-carboxy-5-phosphooxy-5-oxopentan-1-yl)-L-glutamine + NADPH + H(+). It catalyses the reaction [amino-group carrier protein]-C-terminal-gamma-(L-glutamyl-5-semialdehyde)-L-glutamate + phosphate + NADP(+) = [amino-group carrier protein]-C-terminal-gamma-(5-phospho-L-glutamyl)-L-glutamate + NADPH + H(+). It functions in the pathway amino-acid biosynthesis; L-lysine biosynthesis via AAA pathway; L-lysine from L-alpha-aminoadipate (Thermus route): step 3/5. Its pathway is amino-acid biosynthesis; L-arginine biosynthesis. Its function is as follows. Involved in both the arginine and lysine biosynthetic pathways. The chain is Putative [LysW]-L-2-aminoadipate/[LysW]-L-glutamate phosphate reductase from Aeropyrum pernix (strain ATCC 700893 / DSM 11879 / JCM 9820 / NBRC 100138 / K1).